The following is a 25-amino-acid chain: Ocellatin-L2 (25 aa).

Leu-25 carries the leucine amide modification.

This sequence belongs to the frog skin active peptide (FSAP) family. Ocellatin subfamily. As to expression, expressed by the skin glands.

It localises to the secreted. Its function is as follows. Shows a low activity in stimulating insulin release from rat BRIN-BD11 beta cells, and acts without loss of integrity of the plasma membrane. Does not show antibacterial (E.coli and S.aureus). Does not show hemolytic activity against human erythrocytes. This chain is Ocellatin-L2, found in Leptodactylus laticeps (Santa Fe frog).